Reading from the N-terminus, the 128-residue chain is Sulfurtransferase TusD (128 aa).

Cys-78 acts as the Cysteine persulfide intermediate in catalysis.

It belongs to the DsrE/TusD family. In terms of assembly, heterohexamer, formed by a dimer of trimers. The hexameric TusBCD complex contains 2 copies each of TusB, TusC and TusD. The TusBCD complex interacts with TusE.

Its subcellular location is the cytoplasm. Functionally, part of a sulfur-relay system required for 2-thiolation of 5-methylaminomethyl-2-thiouridine (mnm(5)s(2)U) at tRNA wobble positions. Accepts sulfur from TusA and transfers it in turn to TusE. The protein is Sulfurtransferase TusD of Citrobacter koseri (strain ATCC BAA-895 / CDC 4225-83 / SGSC4696).